A 148-amino-acid chain; its full sequence is uncharacterized protein (148 aa).

A compositionally biased stretch (low complexity) spans 37–94 (NNNNYNNNNKNNNNNNNNNNNNNNNNNNNNNNNYINSCNSNNNNNNNNNNTKNNNINS). The segment at 37–99 (NNNNYNNNNK…NNINSRTDKN (63 aa)) is disordered.

This is an uncharacterized protein from Dictyostelium discoideum (Social amoeba).